A 326-amino-acid polypeptide reads, in one-letter code: tRNA-modifying protein YgfZ (326 aa).

Folate is bound by residues tryptophan 27 and tryptophan 189.

It belongs to the tRNA-modifying YgfZ family.

The protein resides in the cytoplasm. In terms of biological role, folate-binding protein involved in regulating the level of ATP-DnaA and in the modification of some tRNAs. It is probably a key factor in regulatory networks that act via tRNA modification, such as initiation of chromosomal replication. In Escherichia coli (strain SE11), this protein is tRNA-modifying protein YgfZ.